We begin with the raw amino-acid sequence, 243 residues long: MKIDILTLFPEMFAPLEHSIVGKAKEKGLLDIHYHNFRDHAEKARHVDDEPYGGGQGMLLRAQPIFDTMDSIQATKPRVILLDPAGKPFHQSYAEELALEEELIFICGHYEGYDERIKTLITDEISLGDFVLTGGELAAMTMIDATVRLIPNVLGKQASHQEDSFSSGLLEYPQYTRPYDYRGMKVPDVLMSGHHEHIRLWRMEQSLKKTYLRRPDLLETYDFSDEERRIFDKIKSELSEGEN.

S-adenosyl-L-methionine contacts are provided by residues glycine 108 and 127–132; that span reads LGDFVL.

It belongs to the RNA methyltransferase TrmD family. In terms of assembly, homodimer.

The protein localises to the cytoplasm. It carries out the reaction guanosine(37) in tRNA + S-adenosyl-L-methionine = N(1)-methylguanosine(37) in tRNA + S-adenosyl-L-homocysteine + H(+). Functionally, specifically methylates guanosine-37 in various tRNAs. The sequence is that of tRNA (guanine-N(1)-)-methyltransferase from Streptococcus equi subsp. zooepidemicus (strain MGCS10565).